The following is a 208-amino-acid chain: Cytidylate kinase (208 aa).

An ATP-binding site is contributed by Gly9–Ser17.

The protein belongs to the cytidylate kinase family. Type 1 subfamily.

The protein localises to the cytoplasm. It catalyses the reaction CMP + ATP = CDP + ADP. The catalysed reaction is dCMP + ATP = dCDP + ADP. In Thermus thermophilus (strain ATCC BAA-163 / DSM 7039 / HB27), this protein is Cytidylate kinase.